We begin with the raw amino-acid sequence, 1505 residues long: ABC transporter C family member 13 (1505 aa).

12 helical membrane passes run 11-31 (EAAA…LLLL), 54-68 (AVDG…VGAW), 71-91 (AALA…SYEV), 102-122 (ALLL…LAMQ), 131-151 (FPVL…GIAY), 171-191 (MVAN…GVMG), 313-333 (AFAA…SYFV), 336-356 (LSGK…FFVA), 367-387 (WYLG…AMVY), 421-441 (AWYF…LAIL), 447-467 (IAMV…VPVA), and 534-554 (FVFW…CILL). One can recognise an ABC transmembrane type-1 1 domain in the interval 314–589 (FAAVNTIVSY…FPDLISMIAQ (276 aa)). In terms of domain architecture, ABC transporter 1 spans 623–846 (ININDATFSW…GTDFNALVCA (224 aa)). An ATP-binding site is contributed by 658 to 665 (GVIGSGKS). A compositionally biased stretch (polar residues) spans 881–897 (DNLKNKVSNNEKPSSTR). The interval 881–919 (DNLKNKVSNNEKPSSTRGIKEKKKKPEERKKKRSVQEEE) is disordered. Over residues 904–919 (KKPEERKKKRSVQEEE) the composition is skewed to basic and acidic residues. Transmembrane regions (helical) follow at residues 940-960 (GTLI…QIAS), 980-1000 (SVVL…FVFV), 1055-1077 (IAFR…AVMS), 1081-1103 (WQVL…YYIA), 1149-1169 (LLDC…WLCL), and 1174-1194 (LSTF…PGTI). Residues 945 to 1215 (LIILAQTMFQ…GLNLNARMSR (271 aa)) form the ABC transmembrane type-1 2 domain. The region spanning 1262–1496 (IELVDLKVRY…KSSMFMQLVS (235 aa)) is the ABC transporter 2 domain. 1296–1303 (GRTGSGKS) provides a ligand contact to ATP.

The protein belongs to the ABC transporter superfamily. ABCC family. Conjugate transporter (TC 3.A.1.208) subfamily.

The protein localises to the membrane. In terms of biological role, ABC transporter that may affect phytic acid transport and compartmentalization. May function directly or indirectly in removing phytic acid from the cytosol or in vesicle trafficking. Required for phytic acid accumulation in developing seeds. Phytic acid is the primary storage form of phosphorus in cereal grains and other plant seeds. The protein is ABC transporter C family member 13 of Oryza sativa subsp. indica (Rice).